A 383-amino-acid chain; its full sequence is Gap junction alpha-1 protein (383 aa).

The Cytoplasmic segment spans residues 2–23 (GDWSALGKLLDKVQAYSTAGGK). Phosphoserine is present on serine 5. Residues 24-44 (VWLSVLFIFRILLLGTAVESA) form a helical membrane-spanning segment. Residues 45–76 (WGDEQSAFRCNTQQPGCENVCYDKSFPISHVR) are Extracellular-facing. Cystine bridges form between cysteine 54/cysteine 193 and cysteine 188/cysteine 199. Residues 77–97 (FWVLQIIFVSVPTLLYLAHVF) form a helical membrane-spanning segment. At 98–156 (YVMRKEEKLNKKEEELKVVAQTDGANVDMHLKQIEIKKFKYGIEEHGKVKMRGGLLRTY) the chain is on the cytoplasmic side. Residue lysine 145 forms a Glycyl lysine isopeptide (Lys-Gly) (interchain with G-Cter in SUMO) linkage. Residues 157–177 (IISILFKSVFEVAFLLIQWYI) form a helical membrane-spanning segment. Topologically, residues 178-208 (YGFSLSAVYTCKRDPCPHQVDCFLSRPTEKT) are extracellular. The chain crosses the membrane as a helical span at residues 209–229 (IFIIFMLVVSLVSLALNIIEL). At 230–383 (FYVFFKGVKD…SRPRPDDLEI (154 aa)) the chain is on the cytoplasmic side. Residue lysine 238 forms a Glycyl lysine isopeptide (Lys-Gly) (interchain with G-Cter in SUMO) linkage. The tract at residues 245–383 (SDPYHTTTGP…SRPRPDDLEI (139 aa)) is interaction with NOV. Tyrosine 248 is modified (phosphotyrosine). Residues serine 256, serine 258, and serine 263 each carry the phosphoserine modification. The tract at residues 265–383 (KYAYFNGCSS…SRPRPDDLEI (119 aa)) is interaction with UBQLN4. S-nitrosocysteine is present on cysteine 272. A Phosphothreonine modification is found at threonine 276. 2 positions are modified to phosphoserine: serine 307 and serine 315. Residues 318–333 (QNRMGQAGSTISNSHA) show a composition bias toward polar residues. The disordered stretch occupies residues 318–383 (QNRMGQAGST…SRPRPDDLEI (66 aa)). Serine 326 carries the phosphoserine; by CK1 modification. Threonine 327 carries the phosphothreonine modification. Phosphoserine; by CK1 is present on residues serine 329 and serine 331. Residues 339–352 (PDDHQNSKKLDAGH) are compositionally biased toward basic and acidic residues. Residues serine 345 and serine 366 each carry the phosphoserine modification. Low complexity predominate over residues 363-375 (RPSSRASSRASSR). Serine 369 is modified (phosphoserine; by PKC/PRKCG and PKC/PRKCD). Phosphoserine is present on residues serine 370 and serine 374.

This sequence belongs to the connexin family. Alpha-type (group II) subfamily. A connexon is composed of a hexamer of connexins. Interacts with SGSM3. Interacts with RIC1/CIP150. Interacts with CNST and CSNK1D. Interacts (via C-terminus) with TJP1. Interacts (via C-terminus) with SRC (via SH3 domain). Interacts (not ubiquitinated) with UBQLN4 (via UBA domain). Interacts with NOV. Interacts with TMEM65. Interacts with ANK3/ANKG and PKP2. In terms of processing, phosphorylation at Ser-326, Ser-329 and Ser-331 by CK1 modulates gap junction assembly. Phosphorylated at Ser-369 by PRKCG; phosphorylation induces disassembly of gap junction plaques and inhibition of gap junction activity. Phosphorylation at Ser-369 by PRKCD triggers its internalization into small vesicles leading to proteasome-mediated degradation. Post-translationally, sumoylated with SUMO1, SUMO2 and SUMO3, which may regulate the level of functional Cx43 gap junctions at the plasma membrane. May be desumoylated by SENP1 or SENP2. Acetylated in the developing cortex; leading to delocalization from the cell membrane.

The protein localises to the cell membrane. It localises to the cell junction. Its subcellular location is the gap junction. It is found in the endoplasmic reticulum. Its function is as follows. Gap junction protein that acts as a regulator of bladder capacity. A gap junction consists of a cluster of closely packed pairs of transmembrane channels, the connexons, through which materials of low MW diffuse from one cell to a neighboring cell. May play a critical role in the physiology of hearing by participating in the recycling of potassium to the cochlear endolymph. Negative regulator of bladder functional capacity: acts by enhancing intercellular electrical and chemical transmission, thus sensitizing bladder muscles to cholinergic neural stimuli and causing them to contract. May play a role in cell growth inhibition through the regulation of NOV expression and localization. Plays an essential role in gap junction communication in the ventricles. This chain is Gap junction alpha-1 protein (GJA1), found in Bos taurus (Bovine).